Consider the following 861-residue polypeptide: Leucine--tRNA ligase (861 aa).

Residues 42-52 (PYPSGKLHMGH) carry the 'HIGH' region motif. A 'KMSKS' region motif is present at residues 620–624 (KMSKS). Lys-623 provides a ligand contact to ATP.

The protein belongs to the class-I aminoacyl-tRNA synthetase family.

The protein localises to the cytoplasm. It catalyses the reaction tRNA(Leu) + L-leucine + ATP = L-leucyl-tRNA(Leu) + AMP + diphosphate. The sequence is that of Leucine--tRNA ligase from Buchnera aphidicola subsp. Schizaphis graminum (strain Sg).